The following is a 212-amino-acid chain: MAHNKSKIPRATLKRLPLYYRFVNTLKSKGIDRVNSKAISEALNIESATIRRDFSYFGELGKKGYGYNIDSLLEFFKTALSDSDNIHIALVGVGNLGRALLTYNFSIHDEMTITEAFDIDEQIVGTEIGDVSVHHMNDLKKVLNAQNINVVILTTPEEAAQRVANQLVEADIQGILNFTPARIEVPNTVQVHHIDLGIELQSLLFFMKNYSN.

A DNA-binding region (H-T-H motif) is located at residues 18-57; that stretch reads LYYRFVNTLKSKGIDRVNSKAISEALNIESATIRRDFSYF. NAD(+) is bound at residue 92 to 97; it reads GVGNLG.

The protein belongs to the transcriptional regulatory Rex family. In terms of assembly, homodimer.

It localises to the cytoplasm. Its function is as follows. Modulates transcription in response to changes in cellular NADH/NAD(+) redox state. This is Redox-sensing transcriptional repressor Rex from Staphylococcus haemolyticus (strain JCSC1435).